The primary structure comprises 767 residues: Ribonucleoside-diphosphate reductase subunit alpha (767 aa).

Positions 1–30 (MHPTLISAPISSSANDAHAGTSQGSHQGHR) are disordered. Positions 9–26 (PISSSANDAHAGTSQGSH) are enriched in polar residues. The 90-residue stretch at 31-120 (IQVIRRDGSS…VWSLWKDTLV (90 aa)) folds into the ATP-cone domain. Residues T228, 243–244 (SC), G272, 460–464 (NLCCE), and 631–635 (PNTSS) contribute to the substrate site. The cysteines at positions 244 and 478 are disulfide-linked. The active-site Proton acceptor is N460. C462 acts as the Cysteine radical intermediate in catalysis. The active-site Proton acceptor is E464.

The protein belongs to the ribonucleoside diphosphate reductase large chain family. In terms of assembly, tetramer of two alpha and two beta subunits.

The enzyme catalyses a 2'-deoxyribonucleoside 5'-diphosphate + [thioredoxin]-disulfide + H2O = a ribonucleoside 5'-diphosphate + [thioredoxin]-dithiol. Under complex allosteric control mediated by deoxynucleoside triphosphates and ATP binding. The type of nucleotide bound at the specificity site determines substrate preference. It seems probable that ATP makes the enzyme reduce CDP and UDP, dGTP favors ADP reduction and dTTP favors GDP reduction. Functionally, provides the precursors necessary for DNA synthesis. Catalyzes the biosynthesis of deoxyribonucleotides from the corresponding ribonucleotides. In Synechocystis sp. (strain ATCC 27184 / PCC 6803 / Kazusa), this protein is Ribonucleoside-diphosphate reductase subunit alpha (nrdA).